The following is a 147-amino-acid chain: Large ribosomal subunit protein bL9 (147 aa).

It belongs to the bacterial ribosomal protein bL9 family.

Functionally, binds to the 23S rRNA. This is Large ribosomal subunit protein bL9 from Clostridium novyi (strain NT).